A 552-amino-acid chain; its full sequence is Membrane protein insertase YidC (552 aa).

A helical membrane pass occupies residues 3 to 23 (IKRTVLWVIFFMSAVMLFDNW). Residues 36 to 59 (SATPTRTVGSAAPGTTTPGTQPAD) are disordered. Over residues 42-59 (TVGSAAPGTTTPGTQPAD) the composition is skewed to low complexity. 3 helical membrane passes run 364-384 (WGWS…PLSA), 430-450 (FGGC…YWVL), and 504-524 (MMFM…GLVL).

It belongs to the OXA1/ALB3/YidC family. Type 1 subfamily. Interacts with the Sec translocase complex via SecD. Specifically interacts with transmembrane segments of nascent integral membrane proteins during membrane integration.

The protein resides in the cell inner membrane. Required for the insertion and/or proper folding and/or complex formation of integral membrane proteins into the membrane. Involved in integration of membrane proteins that insert both dependently and independently of the Sec translocase complex, as well as at least some lipoproteins. Aids folding of multispanning membrane proteins. The chain is Membrane protein insertase YidC from Paraburkholderia xenovorans (strain LB400).